Consider the following 389-residue polypeptide: Abscission/NoCut checkpoint regulator (389 aa).

The FYVE-type zinc-finger motif lies at 1–58 (MESRCYGCAVKFTLFKKEYGCKNCGRAFCNGCLSFSALVPRAGNTQQKVCKQCHTILT). Zn(2+) is bound by residues C5, C8, C21, C24, C29, C32, C50, and C53. S69 is modified (phosphoserine). An MIM1-A motif is present at residues 99–112 (DQAIAERLARLRQE). K132 is covalently cross-linked (Glycyl lysine isopeptide (Lys-Gly) (interchain with G-Cter in SUMO2)). 2 disordered regions span residues 158–177 (PSHT…QAQQ) and 204–227 (QNDL…SQSL). Residues 167 to 177 (QAPDTRTQAQQ) show a composition bias toward low complexity. The segment covering 214-226 (SQRTNSQGQASQS) has biased composition (polar residues). S219 is subject to Phosphoserine. Positions 226-261 (SLEEEKYKLLAEAAVELQEENTRQERILALAKRLAV) form a coiled coil. Residues 252–265 (ILALAKRLAVLKGQ) carry the MIM1-B motif. Phosphoserine is present on S280.

In terms of assembly, interacts (via MIM1-B) with VPS4A; interaction takes place at the midbody ring following cytokinesis checkpoint activation.

It localises to the cytoplasm. It is found in the cytoskeleton. Its subcellular location is the microtubule organizing center. The protein resides in the centrosome. The protein localises to the cleavage furrow. It localises to the midbody. It is found in the midbody ring. Its function is as follows. Key regulator of abscission step in cytokinesis: part of the cytokinesis checkpoint, a process required to delay abscission to prevent both premature resolution of intercellular chromosome bridges and accumulation of DNA damage. Together with CHMP4C, required to retain abscission-competent VPS4 (VPS4A and/or VPS4B) at the midbody ring until abscission checkpoint signaling is terminated at late cytokinesis. Deactivation of AURKB results in dephosphorylation of CHMP4C followed by its dissociation from ZFYVE19/ANCHR and VPS4 and subsequent abscission. This Mus musculus (Mouse) protein is Abscission/NoCut checkpoint regulator (Zfyve19).